The chain runs to 204 residues: uncharacterized protein (204 aa).

Residues 63-83 (SLLLSMVASVTAAGGNAAIVG) form a helical membrane-spanning segment.

The protein resides in the membrane. This is an uncharacterized protein from Mycobacterium tuberculosis (strain ATCC 25618 / H37Rv).